Here is a 76-residue protein sequence, read N- to C-terminus: Vasotab-TY1 (76 aa).

The first 21 residues, 1 to 21 (MKFTLFSVLVVLLIATFVAAD), serve as a signal peptide directing secretion. Positions 22–76 (DCPRICTADFRPVCGTPSGGRRSANRTFGNQCSLDSHNCLNKGDTYDKLHDGECK) constitute a Kazal-like domain. 3 disulfides stabilise this stretch: C23-C60, C27-C53, and C35-C75.

As to expression, expressed by the salivary gland.

The protein localises to the secreted. Functionally, vasodilator protein that inhibits vasoconstriction of isolated rat femoral artery induced by phenylephrine. Since platelet aggregation and vasoconstriction are key hemostatic responses, particularly in small wounds, this protein likely participates in the antihemostatic responses during blood feeding. Blocks L-type calcium channels (Cav1/CACNA1) in left ventricular myocytes isolated from rat hearts. This is Vasotab-TY1 from Tabanus yao (Horsefly).